Reading from the N-terminus, the 197-residue chain is dTTP/UTP pyrophosphatase (197 aa).

The active-site Proton acceptor is D70.

The protein belongs to the Maf family. YhdE subfamily. It depends on a divalent metal cation as a cofactor.

The protein resides in the cytoplasm. It carries out the reaction dTTP + H2O = dTMP + diphosphate + H(+). The enzyme catalyses UTP + H2O = UMP + diphosphate + H(+). In terms of biological role, nucleoside triphosphate pyrophosphatase that hydrolyzes dTTP and UTP. May have a dual role in cell division arrest and in preventing the incorporation of modified nucleotides into cellular nucleic acids. This chain is dTTP/UTP pyrophosphatase, found in Methanosarcina barkeri (strain Fusaro / DSM 804).